The sequence spans 139 residues: Chemical-damaging agent resistance protein B (139 aa).

The protein belongs to the CAPAB/TerDEXZ family.

Functionally, not known; could confer methyl methane sulfonate (MMS), mitomycin C (MC), and UV resistance. In Clostridium acetobutylicum, this protein is Chemical-damaging agent resistance protein B.